We begin with the raw amino-acid sequence, 843 residues long: Protein P (843 aa).

A terminal protein domain (TP) region spans residues 1-177 (MPLSYQHFRK…FCGSPYSWEQ (177 aa)). The segment at 178–346 (ELQHGRLVFQ…YCLTHIVNLL (169 aa)) is spacer. Disordered regions lie at residues 220–273 (QSRL…SSTS) and 289–316 (LSTS…RSQS). Over residues 289-299 (LSTSKRQSSSG) the composition is skewed to polar residues. A polymerase/reverse transcriptase domain (RT) region spans residues 347-690 (EDWGPCTEHG…YLNLYPVARQ (344 aa)). Residues 357 to 600 (EHNIRIPRTP…YSLNFMGYVI (244 aa)) enclose the Reverse transcriptase domain. The Mg(2+) site is built by aspartate 429, aspartate 551, and aspartate 552.

It belongs to the hepadnaviridae P protein family.

It carries out the reaction DNA(n) + a 2'-deoxyribonucleoside 5'-triphosphate = DNA(n+1) + diphosphate. The catalysed reaction is Endonucleolytic cleavage to 5'-phosphomonoester.. Its activity is regulated as follows. Activated by host HSP70 and HSP40 in vitro to be able to bind the epsilon loop of the pgRNA. Because deletion of the RNase H region renders the protein partly chaperone-independent, the chaperones may be needed indirectly to relieve occlusion of the RNA-binding site by this domain. Inhibited by several reverse-transcriptase inhibitors: Lamivudine, Adefovir and Entecavir. Multifunctional enzyme that converts the viral RNA genome into dsDNA in viral cytoplasmic capsids. This enzyme displays a DNA polymerase activity that can copy either DNA or RNA templates, and a ribonuclease H (RNase H) activity that cleaves the RNA strand of RNA-DNA heteroduplexes in a partially processive 3'- to 5'-endonucleasic mode. Neo-synthesized pregenomic RNA (pgRNA) are encapsidated together with the P protein, and reverse-transcribed inside the nucleocapsid. Initiation of reverse-transcription occurs first by binding the epsilon loop on the pgRNA genome, and is initiated by protein priming, thereby the 5'-end of (-)DNA is covalently linked to P protein. Partial (+)DNA is synthesized from the (-)DNA template and generates the relaxed circular DNA (RC-DNA) genome. After budding and infection, the RC-DNA migrates in the nucleus, and is converted into a plasmid-like covalently closed circular DNA (cccDNA). The activity of P protein does not seem to be necessary for cccDNA generation, and is presumably released from (+)DNA by host nuclear DNA repair machinery. The chain is Protein P from Hepatitis B virus genotype C subtype ad (isolate Japan/S-179/1988) (HBV-C).